Here is a 193-residue protein sequence, read N- to C-terminus: Imidazoleglycerol-phosphate dehydratase (193 aa).

This sequence belongs to the imidazoleglycerol-phosphate dehydratase family.

The protein localises to the cytoplasm. The catalysed reaction is D-erythro-1-(imidazol-4-yl)glycerol 3-phosphate = 3-(imidazol-4-yl)-2-oxopropyl phosphate + H2O. Its pathway is amino-acid biosynthesis; L-histidine biosynthesis; L-histidine from 5-phospho-alpha-D-ribose 1-diphosphate: step 6/9. In Sulfolobus acidocaldarius (strain ATCC 33909 / DSM 639 / JCM 8929 / NBRC 15157 / NCIMB 11770), this protein is Imidazoleglycerol-phosphate dehydratase.